The primary structure comprises 254 residues: Probable membrane transporter protein YjnA (254 aa).

6 consecutive transmembrane segments (helical) span residues 5–25, 75–95, 105–125, 143–163, 187–207, and 209–229; these read IILM…GGAA, AIGS…FPAF, HALG…LFLD, ALTI…SIGS, IAHA…FGSV, and YMLA…GSHL.

Belongs to the 4-toluene sulfonate uptake permease (TSUP) (TC 2.A.102) family.

The protein localises to the cell membrane. This is Probable membrane transporter protein YjnA (yjnA) from Bacillus subtilis (strain 168).